The chain runs to 507 residues: Arylsulfatase A (507 aa).

A signal peptide spans 1 to 18 (MGAPRSLLLALAAGLAVA). Ca(2+)-binding residues include aspartate 29, aspartate 30, and cysteine 69. The active-site Nucleophile is the cysteine 69. Residue cysteine 69 is modified to 3-oxoalanine (Cys). Lysine 123 provides a ligand contact to substrate. Histidine 125 is a catalytic residue. Serine 150 provides a ligand contact to substrate. 2 disulfide bridges follow: cysteine 156–cysteine 172 and cysteine 161–cysteine 168. The N-linked (GlcNAc...) asparagine glycan is linked to asparagine 158. N-linked (GlcNAc...) asparagine glycosylation is present at asparagine 184. Histidine 229 lines the substrate pocket. Positions 281 and 282 each coordinate Ca(2+). 4 disulfides stabilise this stretch: cysteine 300–cysteine 414, cysteine 488–cysteine 500, cysteine 489–cysteine 502, and cysteine 493–cysteine 499. Lysine 302 provides a ligand contact to substrate. A glycan (N-linked (GlcNAc...) asparagine) is linked at asparagine 350.

Belongs to the sulfatase family. As to quaternary structure, homodimer at neutral pH and homooctamer at acidic pH. Exists both as a single chain of 58 kDa (component A) or as a chain of 50 kDa (component B) linked by disulfide bond(s) to a 7 kDa chain (component C). Interacts with SUMF1. Ca(2+) serves as cofactor. The conversion to 3-oxoalanine (also known as C-formylglycine, FGly), of a serine or cysteine residue in prokaryotes and of a cysteine residue in eukaryotes, is critical for catalytic activity. This post-translational modification is severely defective in multiple sulfatase deficiency (MSD).

It localises to the endoplasmic reticulum. The protein localises to the lysosome. It catalyses the reaction an N-acyl-1-beta-D-(3-O-sulfo)-galactosyl-sphing-4-enine + H2O = a beta-D-galactosyl-(1&lt;-&gt;1')-N-acylsphing-4-enine + sulfate + H(+). With respect to regulation, inhibited by phosphate. The phosphate forms a covalent bond with the active site 3-oxoalanine. Hydrolyzes cerebroside sulfate. The sequence is that of Arylsulfatase A (ARSA) from Homo sapiens (Human).